A 148-amino-acid chain; its full sequence is Ubiquitin-conjugating enzyme E2 11 (148 aa).

A UBC core domain is found at 1 to 147; the sequence is MASKRILKEL…ARSWTQKYAM (147 aa). The Glycyl thioester intermediate role is filled by Cys85.

It belongs to the ubiquitin-conjugating enzyme family. Interacts with the E3 ubiquitin-protein ligases MBR1 and MBR2. In terms of tissue distribution, ubiquitously expressed. Mainly in petals.

It catalyses the reaction S-ubiquitinyl-[E1 ubiquitin-activating enzyme]-L-cysteine + [E2 ubiquitin-conjugating enzyme]-L-cysteine = [E1 ubiquitin-activating enzyme]-L-cysteine + S-ubiquitinyl-[E2 ubiquitin-conjugating enzyme]-L-cysteine.. Its pathway is protein modification; protein ubiquitination. Its function is as follows. Accepts the ubiquitin from the E1 complex and catalyzes its covalent attachment to other proteins. Mediates the selective degradation of short-lived and abnormal proteins. This Arabidopsis thaliana (Mouse-ear cress) protein is Ubiquitin-conjugating enzyme E2 11 (UBC11).